The following is a 199-amino-acid chain: Imidazoleglycerol-phosphate dehydratase (199 aa).

It belongs to the imidazoleglycerol-phosphate dehydratase family.

The protein localises to the cytoplasm. It catalyses the reaction D-erythro-1-(imidazol-4-yl)glycerol 3-phosphate = 3-(imidazol-4-yl)-2-oxopropyl phosphate + H2O. Its pathway is amino-acid biosynthesis; L-histidine biosynthesis; L-histidine from 5-phospho-alpha-D-ribose 1-diphosphate: step 6/9. The polypeptide is Imidazoleglycerol-phosphate dehydratase (Mesorhizobium japonicum (strain LMG 29417 / CECT 9101 / MAFF 303099) (Mesorhizobium loti (strain MAFF 303099))).